The chain runs to 263 residues: Tryptophan synthase alpha chain (263 aa).

Active-site proton acceptor residues include Glu47 and Asp58.

Belongs to the TrpA family. Tetramer of two alpha and two beta chains.

The protein localises to the plastid. It is found in the chloroplast. It carries out the reaction (1S,2R)-1-C-(indol-3-yl)glycerol 3-phosphate + L-serine = D-glyceraldehyde 3-phosphate + L-tryptophan + H2O. Its pathway is amino-acid biosynthesis; L-tryptophan biosynthesis; L-tryptophan from chorismate: step 5/5. In terms of biological role, the alpha subunit is responsible for the aldol cleavage of indoleglycerol phosphate to indole and glyceraldehyde 3-phosphate. The sequence is that of Tryptophan synthase alpha chain from Antithamnion sp. (Red alga).